A 596-amino-acid chain; its full sequence is NADH-quinone oxidoreductase subunit C/D (596 aa).

Positions 1-186 (MMNDNKYIHI…PAFTLTRKKE (186 aa)) are NADH dehydrogenase I subunit C. The tract at residues 210 to 596 (DFMFLNLGPN…IDFVMSDVDR (387 aa)) is NADH dehydrogenase I subunit D.

The protein in the N-terminal section; belongs to the complex I 30 kDa subunit family. It in the C-terminal section; belongs to the complex I 49 kDa subunit family. NDH-1 is composed of 13 different subunits. Subunits NuoB, CD, E, F, and G constitute the peripheral sector of the complex.

The protein localises to the cell inner membrane. The enzyme catalyses a quinone + NADH + 5 H(+)(in) = a quinol + NAD(+) + 4 H(+)(out). Functionally, NDH-1 shuttles electrons from NADH, via FMN and iron-sulfur (Fe-S) centers, to quinones in the respiratory chain. The immediate electron acceptor for the enzyme in this species is believed to be ubiquinone. Couples the redox reaction to proton translocation (for every two electrons transferred, four hydrogen ions are translocated across the cytoplasmic membrane), and thus conserves the redox energy in a proton gradient. The chain is NADH-quinone oxidoreductase subunit C/D from Blochmanniella floridana.